Consider the following 708-residue polypeptide: Leukotoxin translocation ATP-binding protein LktB (708 aa).

In terms of domain architecture, Peptidase C39 spans 1-126 (MEANHQRNDL…ACYQGQLILV (126 aa)). The ABC transmembrane type-1 domain maps to 155–437 (FLETLIVSIF…LAQLWQDFQQ (283 aa)). The next 5 helical transmembrane spans lie at 159–179 (LIVSIFLQIFALITPLFFQVV), 192–212 (LNIITVALAIVIIFEIVLSGL), 270–290 (ALTSVLDLLFSFIFFAVMWYY), 296–316 (LVILGSLPCYILWSIFISPIL), and 389–409 (VMVINLWLGAHLVISGDLSIG). The ABC transporter domain occupies 469-704 (ISFKNIRFRY…SNGLYSYLHQ (236 aa)). 503 to 510 (GRSGSGKS) contributes to the ATP binding site.

The protein belongs to the ABC transporter superfamily. Protein-1 exporter (TC 3.A.1.109) family. In terms of assembly, homodimer.

The protein localises to the cell inner membrane. The enzyme catalyses ATP + H2O + proteinSide 1 = ADP + phosphate + proteinSide 2.. Its function is as follows. Part of the ABC transporter complex LktBD involved in leukotoxin export. Transmembrane domains (TMD) form a pore in the inner membrane and the ATP-binding domain (NBD) is responsible for energy generation. The polypeptide is Leukotoxin translocation ATP-binding protein LktB (lktB) (Mannheimia haemolytica (Pasteurella haemolytica)).